Reading from the N-terminus, the 331-residue chain is Syntaxin-43 (331 aa).

The Cytoplasmic segment spans residues 1 to 305 (MATRNRTLLF…KAERTQRQGG (305 aa)). 2 disordered regions span residues 20–45 (VRAPMGSSSSSTLTEHNSLTGAKSGL) and 59–80 (PNRSYAPVSTEDPGNSSRGTIT). Polar residues predominate over residues 31 to 40 (TLTEHNSLTG). Positions 124-154 (KEDQHQIETLTQEVTFLLKKSEKQLQRLSAA) form a coiled coil. Residues 235-297 (EEISIEREKE…DDGLKQLQKA (63 aa)) enclose the t-SNARE coiled-coil homology domain. Residues 306 to 326 (MVMCASVLVILCFIMLVLLIL) form a helical; Anchor for type IV membrane protein membrane-spanning segment. Topologically, residues 327–331 (KEILL) are vesicular.

The protein belongs to the syntaxin family. As to quaternary structure, part of the t-SNARE complex. Expressed at low levels in roots, stems, flowers and leaves.

The protein resides in the golgi apparatus. Its subcellular location is the trans-Golgi network membrane. Contributes to the regulation of secretory and vacuolar transport pathways in the post-Golgi network, and to the maintenance of the Golgi apparatus and trans-Golgi network (TGN) morphologies. Vesicle trafficking protein that functions in the secretory pathway and mediates liposome fusion. Required for extracellular resistance responses to a fungal pathogen. Also involved in the protection of chloroplasts from salicylic acid-dependent biotic stress. This chain is Syntaxin-43, found in Arabidopsis thaliana (Mouse-ear cress).